Reading from the N-terminus, the 567-residue chain is 2-succinyl-5-enolpyruvyl-6-hydroxy-3-cyclohexene-1-carboxylate synthase (567 aa).

The protein belongs to the TPP enzyme family. MenD subfamily. Homodimer. Mg(2+) is required as a cofactor. It depends on Mn(2+) as a cofactor. The cofactor is thiamine diphosphate.

The enzyme catalyses isochorismate + 2-oxoglutarate + H(+) = 5-enolpyruvoyl-6-hydroxy-2-succinyl-cyclohex-3-ene-1-carboxylate + CO2. Its pathway is quinol/quinone metabolism; 1,4-dihydroxy-2-naphthoate biosynthesis; 1,4-dihydroxy-2-naphthoate from chorismate: step 2/7. It functions in the pathway quinol/quinone metabolism; menaquinone biosynthesis. Catalyzes the thiamine diphosphate-dependent decarboxylation of 2-oxoglutarate and the subsequent addition of the resulting succinic semialdehyde-thiamine pyrophosphate anion to isochorismate to yield 2-succinyl-5-enolpyruvyl-6-hydroxy-3-cyclohexene-1-carboxylate (SEPHCHC). The protein is 2-succinyl-5-enolpyruvyl-6-hydroxy-3-cyclohexene-1-carboxylate synthase of Shewanella loihica (strain ATCC BAA-1088 / PV-4).